The following is a 444-amino-acid chain: Adenylosuccinate lyase (444 aa).

N(6)-(1,2-dicarboxyethyl)-AMP contacts are provided by residues 9–10, 73–75, and 97–98; these read RY, KHD, and TS. Residue H145 is the Proton donor/acceptor of the active site. Q219 is a binding site for N(6)-(1,2-dicarboxyethyl)-AMP. S269 acts as the Proton donor/acceptor in catalysis. Residues S270, 275-277, N283, and 314-318 contribute to the N(6)-(1,2-dicarboxyethyl)-AMP site; these read KRN and SAERI.

This sequence belongs to the lyase 1 family. Adenylosuccinate lyase subfamily. Homotetramer. Residues from neighboring subunits contribute catalytic and substrate-binding residues to each active site.

The enzyme catalyses N(6)-(1,2-dicarboxyethyl)-AMP = fumarate + AMP. It carries out the reaction (2S)-2-[5-amino-1-(5-phospho-beta-D-ribosyl)imidazole-4-carboxamido]succinate = 5-amino-1-(5-phospho-beta-D-ribosyl)imidazole-4-carboxamide + fumarate. It functions in the pathway purine metabolism; AMP biosynthesis via de novo pathway; AMP from IMP: step 2/2. The protein operates within purine metabolism; IMP biosynthesis via de novo pathway; 5-amino-1-(5-phospho-D-ribosyl)imidazole-4-carboxamide from 5-amino-1-(5-phospho-D-ribosyl)imidazole-4-carboxylate: step 2/2. Catalyzes two reactions in de novo purine nucleotide biosynthesis. Catalyzes the breakdown of 5-aminoimidazole- (N-succinylocarboxamide) ribotide (SAICAR or 2-[5-amino-1-(5-phospho-beta-D-ribosyl)imidazole-4-carboxamido]succinate) to 5-aminoimidazole-4-carboxamide ribotide (AICAR or 5-amino-1-(5-phospho-beta-D-ribosyl)imidazole-4-carboxamide) and fumarate, and of adenylosuccinate (ADS or N(6)-(1,2-dicarboxyethyl)-AMP) to adenosine monophosphate (AMP) and fumarate. The polypeptide is Adenylosuccinate lyase (purB) (Archaeoglobus fulgidus (strain ATCC 49558 / DSM 4304 / JCM 9628 / NBRC 100126 / VC-16)).